The primary structure comprises 167 residues: Urease accessory protein UreE (167 aa).

A disordered region spans residues 137–167 (ARGAYHAHGGHSHGHDHGHSHGHDHHDHSHD). The segment covering 149-167 (HGHDHGHSHGHDHHDHSHD) has biased composition (basic and acidic residues).

The protein belongs to the UreE family.

It is found in the cytoplasm. Involved in urease metallocenter assembly. Binds nickel. Probably functions as a nickel donor during metallocenter assembly. This Rhizobium rhizogenes (strain K84 / ATCC BAA-868) (Agrobacterium radiobacter) protein is Urease accessory protein UreE.